Consider the following 133-residue polypeptide: ATP synthase epsilon chain (133 aa).

This sequence belongs to the ATPase epsilon chain family. As to quaternary structure, F-type ATPases have 2 components, CF(1) - the catalytic core - and CF(0) - the membrane proton channel. CF(1) has five subunits: alpha(3), beta(3), gamma(1), delta(1), epsilon(1). CF(0) has three main subunits: a, b and c.

The protein localises to the cell membrane. Its function is as follows. Produces ATP from ADP in the presence of a proton gradient across the membrane. The protein is ATP synthase epsilon chain of Clostridium botulinum (strain 657 / Type Ba4).